A 514-amino-acid polypeptide reads, in one-letter code: Probable transposase for insertion sequence element IS1353 (514 aa).

Residues 172 to 216 (KGDTSLEQRHEALLRELAELESQNQRLRMENAILEKASELIKKDM) are a coiled coil. Residues 346–510 (HASAPNTKWL…SPIEYRHAVG (165 aa)) enclose the Integrase catalytic domain. Residues aspartate 357 and aspartate 417 each contribute to the Mg(2+) site.

The protein belongs to the transposase 8 family.

Functionally, probably involved in the transposition of insertion sequence IS1353. The protein is Probable transposase for insertion sequence element IS1353 of Shigella flexneri.